The following is a 481-amino-acid chain: Surface lipoprotein assembly modifier 2 (481 aa).

The first 24 residues, 1–24, serve as a signal peptide directing secretion; the sequence is MKNGVKQLFLLSLIGLSLTNVAWA. The segment at 24-192 is N-terminal domain; it reads AEVARPKNDT…QYLLTLNQRN (169 aa). The segment at 193–481 is C-terminal probable beta barrel; sequence QWIWQVGLNF…RIYLEIGKIF (289 aa). Beta stranded transmembrane passes span 194–204, 223–243, 248–257, 271–281, 285–295, 315–325, 329–339, 353–363, 368–377, 390–399, 404–414, 432–441, 448–458, and 471–481; these read WIWQVGLNFLN, AWEK…KKWP, FFSKTMFNGN, TVRIGGGLGYQ, VEVSLFPFQEK, LGIRLENVDWL, WQISTALEYGE, YFVSSTLFYLP, FWFVGMDFHR, KTLRLGWGQD, ISSRLTFSYAN, YTTTITLWHR, LTPKLSWDYQK, and NRIYLEIGKIF.

Belongs to the Slam family.

The protein resides in the cell outer membrane. Required for correct export to the cell surface of some cell outer membrane lipoproteins. The sequence is that of Surface lipoprotein assembly modifier 2 from Haemophilus influenzae (strain ATCC 51907 / DSM 11121 / KW20 / Rd).